Here is a 273-residue protein sequence, read N- to C-terminus: Glutamate racemase (273 aa).

Substrate-binding positions include 11 to 12 (DS) and 43 to 44 (YG). Cys-74 (proton donor/acceptor) is an active-site residue. 75–76 (NT) provides a ligand contact to substrate. Cys-185 functions as the Proton donor/acceptor in the catalytic mechanism. Residue 186–187 (TH) participates in substrate binding.

The protein belongs to the aspartate/glutamate racemases family. Homodimer.

The enzyme catalyses L-glutamate = D-glutamate. Its pathway is cell wall biogenesis; peptidoglycan biosynthesis. Its function is as follows. Provides the (R)-glutamate required for cell wall biosynthesis. In Enterococcus faecalis (strain ATCC 700802 / V583), this protein is Glutamate racemase.